We begin with the raw amino-acid sequence, 413 residues long: L-arginine-specific L-amino acid ligase (413 aa).

The ATP-grasp domain maps to 115 to 312; sequence KTKLKMEGIP…LWESSLNISV (198 aa). 141-202 contacts ATP; sequence GEKLGWPIIV…EKCIEMEEFH (62 aa). The Mg(2+) site is built by E268 and E281. E268 and E281 together coordinate Mn(2+).

As to quaternary structure, homodimer. Mg(2+) serves as cofactor. The cofactor is Mn(2+). Co(2+) is required as a cofactor.

It catalyses the reaction an L-alpha-amino acid + L-arginine + ATP = L-arginyl-L-alpha-amino acid + ADP + phosphate + H(+). Its function is as follows. Catalyzes the synthesis of Arg-Xaa dipeptides in an ATP-dependent manner. Has strict specificity toward arginine as the N-terminal substrate. The protein is L-arginine-specific L-amino acid ligase of Bacillus subtilis.